A 208-amino-acid polypeptide reads, in one-letter code: Small ribosomal subunit protein uS4A (208 aa).

Residues 98 to 161 (LRLDNVVFRM…RKVLRISEAL (64 aa)) form the S4 RNA-binding domain.

The protein belongs to the universal ribosomal protein uS4 family. In terms of assembly, part of the 30S ribosomal subunit. Contacts protein S5. The interaction surface between S4 and S5 is involved in control of translational fidelity.

Its function is as follows. One of the primary rRNA binding proteins, it binds directly to 16S rRNA where it nucleates assembly of the body of the 30S subunit. In terms of biological role, with S5 and S12 plays an important role in translational accuracy. The polypeptide is Small ribosomal subunit protein uS4A (Myxococcus xanthus (strain DK1622)).